A 290-amino-acid chain; its full sequence is 33 kDa chaperonin (290 aa).

Intrachain disulfides connect Cys-236–Cys-238 and Cys-269–Cys-272.

Belongs to the HSP33 family. Under oxidizing conditions two disulfide bonds are formed involving the reactive cysteines. Under reducing conditions zinc is bound to the reactive cysteines and the protein is inactive.

It localises to the cytoplasm. Functionally, redox regulated molecular chaperone. Protects both thermally unfolding and oxidatively damaged proteins from irreversible aggregation. Plays an important role in the bacterial defense system toward oxidative stress. This Brevibacillus brevis (strain 47 / JCM 6285 / NBRC 100599) protein is 33 kDa chaperonin.